The primary structure comprises 344 residues: Aspartate-semialdehyde dehydrogenase (344 aa).

Residues 10 to 13 and 38 to 39 each bind NADP(+); these read TGQV and RS. Residue Arg-101 coordinates phosphate. Cys-131 (acyl-thioester intermediate) is an active-site residue. Residue Gln-158 participates in substrate binding. 161 to 162 is an NADP(+) binding site; sequence SG. Lys-228 contacts phosphate. Arg-250 contacts substrate. His-257 serves as the catalytic Proton acceptor. Asn-326 serves as a coordination point for NADP(+).

It belongs to the aspartate-semialdehyde dehydrogenase family. In terms of assembly, homodimer.

The catalysed reaction is L-aspartate 4-semialdehyde + phosphate + NADP(+) = 4-phospho-L-aspartate + NADPH + H(+). It functions in the pathway amino-acid biosynthesis; L-lysine biosynthesis via DAP pathway; (S)-tetrahydrodipicolinate from L-aspartate: step 2/4. It participates in amino-acid biosynthesis; L-methionine biosynthesis via de novo pathway; L-homoserine from L-aspartate: step 2/3. The protein operates within amino-acid biosynthesis; L-threonine biosynthesis; L-threonine from L-aspartate: step 2/5. Catalyzes the NADPH-dependent formation of L-aspartate-semialdehyde (L-ASA) by the reductive dephosphorylation of L-aspartyl-4-phosphate. The sequence is that of Aspartate-semialdehyde dehydrogenase from Corynebacterium melassecola.